The following is a 148-amino-acid chain: UPF0260 protein Sfri_1740 (148 aa).

Belongs to the UPF0260 family.

The sequence is that of UPF0260 protein Sfri_1740 from Shewanella frigidimarina (strain NCIMB 400).